We begin with the raw amino-acid sequence, 195 residues long: uncharacterized protein (195 aa).

Residues 34 to 165 (SHHAAVLIPI…WLDIHRGGVN (132 aa)) form the Nudix hydrolase domain. Residues 72-94 (GKADPQDSSLIETALREAEEEVA) carry the Nudix box motif. The Mg(2+) site is built by E88 and E92.

It belongs to the Nudix hydrolase family. PCD1 subfamily. Requires Mn(2+) as cofactor. The cofactor is Mg(2+).

In terms of biological role, probably mediates the hydrolysis of some nucleoside diphosphate derivatives. This is an uncharacterized protein from Yersinia enterocolitica serotype O:8 / biotype 1B (strain NCTC 13174 / 8081).